We begin with the raw amino-acid sequence, 1032 residues long: Vacuolar membrane protease (1032 aa).

Topologically, residues 1–11 are cytoplasmic; it reads MRFQNPFAFRP. Residues 12 to 32 form a helical membrane-spanning segment; the sequence is GPVSFWTTVIYLALVIPLIYV. The Vacuolar portion of the chain corresponds to 33–426; sequence HETVPPAPSD…AWAVFALRGL (394 aa). Residues N50 and N142 are each glycosylated (N-linked (GlcNAc...) asparagine). Zn(2+)-binding residues include H207 and D219. The Proton acceptor role is filled by E253. The Zn(2+) site is built by E254, E279, and H352. The helical transmembrane segment at 427–447 threads the bilayer; that stretch reads FAWSLTLLVATPLILVAITYI. Over 448–482 the chain is Cytoplasmic; the sequence is LARKDKYYFFSRDIKMHHDINDDPVVLGGWKGFLR. Residues 483 to 503 traverse the membrane as a helical segment; it reads FPFALVFAGALTIASTLLLAK. The Vacuolar segment spans residues 504 to 511; the sequence is FNPLIIYS. Residues 512–532 traverse the membrane as a helical segment; the sequence is SPYAVWSMTLSIFYFSFWLIM. At 533 to 545 the chain is on the cytoplasmic side; the sequence is RGASFIRPSALHR. A helical membrane pass occupies residues 546-566; the sequence is GYVLIWLFALGWGLQVVGAVA. Over 567–573 the chain is Vacuolar; the sequence is EDRLHIA. Residues 574-594 traverse the membrane as a helical segment; sequence ALYATVFLQSAVFLALFISLL. Over 595 to 708 the chain is Cytoplasmic; the sequence is EQFALLGKHD…WSGRLPSWTW (114 aa). Over residues 616-631 the composition is skewed to basic and acidic residues; it reads RDISSHGTDHESRPQP. Residues 616–666 form a disordered region; the sequence is RDISSHGTDHESRPQPEEEPAQPEGDEDESEDATETTPLRANEPGYGSSTR. The segment covering 632–649 has biased composition (acidic residues); that stretch reads EEEPAQPEGDEDESEDAT. A helical membrane pass occupies residues 709 to 729; the sequence is IIQFLLLAPVPVILFGNLGLV. Topologically, residues 730–745 are vacuolar; it reads AMSALQMTGTDGGSLL. The chain crosses the membrane as a helical span at residues 746–766; the sequence is VPVLTLGIVSIFLLLPLTPFI. Residues 767-773 lie on the Cytoplasmic side of the membrane; it reads HRVSHHV. The chain crosses the membrane as a helical span at residues 774 to 794; that stretch reads PMFLLCVFAGTFIYNLVAFPF. Topologically, residues 795–1032 are vacuolar; the sequence is SDSHRFKFYF…LVEVRKTYKV (238 aa). N-linked (GlcNAc...) asparagine glycosylation is found at N812 and N884.

This sequence belongs to the peptidase M28 family. Zn(2+) serves as cofactor.

It is found in the vacuole membrane. Functionally, may be involved in vacuolar sorting and osmoregulation. The sequence is that of Vacuolar membrane protease from Fusarium vanettenii (strain ATCC MYA-4622 / CBS 123669 / FGSC 9596 / NRRL 45880 / 77-13-4) (Fusarium solani subsp. pisi).